Consider the following 196-residue polypeptide: Pyridoxine/pyridoxamine 5'-phosphate oxidase (196 aa).

Residues 44 to 49, 59 to 60, Arg65, Lys66, and Gln88 each bind FMN; these read RTVLLK and YT. Residue Lys49 coordinates substrate. Positions 106, 110, and 114 each coordinate substrate. FMN-binding positions include 123 to 124 and Trp169; that span reads QS. Substrate is bound at residue 175–177; the sequence is RLH. Arg179 contacts FMN.

It belongs to the pyridoxamine 5'-phosphate oxidase family. Homodimer. The cofactor is FMN.

It catalyses the reaction pyridoxamine 5'-phosphate + O2 + H2O = pyridoxal 5'-phosphate + H2O2 + NH4(+). The catalysed reaction is pyridoxine 5'-phosphate + O2 = pyridoxal 5'-phosphate + H2O2. Its pathway is cofactor metabolism; pyridoxal 5'-phosphate salvage; pyridoxal 5'-phosphate from pyridoxamine 5'-phosphate: step 1/1. It participates in cofactor metabolism; pyridoxal 5'-phosphate salvage; pyridoxal 5'-phosphate from pyridoxine 5'-phosphate: step 1/1. Its function is as follows. Catalyzes the oxidation of either pyridoxine 5'-phosphate (PNP) or pyridoxamine 5'-phosphate (PMP) into pyridoxal 5'-phosphate (PLP). The polypeptide is Pyridoxine/pyridoxamine 5'-phosphate oxidase (Alkalilimnicola ehrlichii (strain ATCC BAA-1101 / DSM 17681 / MLHE-1)).